The primary structure comprises 587 residues: GATA zinc finger domain-containing protein 3 (587 aa).

Residues 53–74 are compositionally biased toward low complexity; that stretch reads NINNNINNNNNNNNNNNNNNIN. Disordered stretches follow at residues 53–141, 179–294, and 312–392; these read NINN…LKIP, QLAH…SSPS, and QTSP…ATIN. Residues 75 to 86 show a composition bias toward polar residues; it reads QYHQNHYDQYSD. Composition is skewed to low complexity over residues 87 to 136, 183 to 202, 237 to 264, 272 to 292, and 316 to 333; these read NNCN…NNNN, NSSMPNSPTSSNISPSTPTS, NINGNHHNNNNNINNNINNNVNNNINNG, GNNNNNNNIGVNGSGSSNSSS, and SQQSQQQQQQQQQQQQSQ. Polar residues-rich tracts occupy residues 340 to 358 and 365 to 379; these read INTTEIHQRSNPSSATNSP and NESSVENSPFTTPLS. The GATA-type zinc finger occupies 500–525; the sequence is CIFCGTMETPEWRKGPGGHKTLCNAC. A disordered region spans residues 536–587; the sequence is ENQNNGGSPNPQQNNVTTTTTTTTSTSTNSPNSNGNNFSPESAMSVSKLISD. Over residues 538 to 575 the composition is skewed to low complexity; it reads QNNGGSPNPQQNNVTTTTTTTTSTSTNSPNSNGNNFSP. Residues 577–587 are compositionally biased toward polar residues; it reads SAMSVSKLISD.

This Dictyostelium discoideum (Social amoeba) protein is GATA zinc finger domain-containing protein 3 (gtaC).